We begin with the raw amino-acid sequence, 128 residues long: Small ribosomal subunit protein uS11 (128 aa).

It belongs to the universal ribosomal protein uS11 family. Part of the 30S ribosomal subunit. Interacts with proteins S7 and S18. Binds to IF-3.

Located on the platform of the 30S subunit, it bridges several disparate RNA helices of the 16S rRNA. Forms part of the Shine-Dalgarno cleft in the 70S ribosome. The chain is Small ribosomal subunit protein uS11 from Desulforudis audaxviator (strain MP104C).